We begin with the raw amino-acid sequence, 423 residues long: Growth hormone-releasing hormone receptor (423 aa).

A signal peptide spans 1–22; that stretch reads MDGLMWATRILCLLSLCGVTLG. Residues 23 to 130 lie on the Extracellular side of the membrane; it reads HLHLECDFIT…KEKSYFSTVK (108 aa). 3 disulfides stabilise this stretch: cysteine 41–cysteine 64, cysteine 55–cysteine 96, and cysteine 78–cysteine 112. 2 N-linked (GlcNAc...) asparagine glycosylation sites follow: asparagine 49 and asparagine 50. The chain crosses the membrane as a helical span at residues 131–151; that stretch reads IIYTTGHSISIVALCVAIAIL. Residues 152-167 lie on the Cytoplasmic side of the membrane; that stretch reads VALRRLHCPRNYIHTQ. A helical membrane pass occupies residues 168–188; the sequence is LFATFILKASAVFLKDAAIFQ. The Extracellular segment spans residues 189–210; the sequence is GDSTDHCSMSTVLCKVSVAISH. Residues 211–231 form a helical membrane-spanning segment; that stretch reads LATMTNFSWLLAEAVYLSCLL. Residues 232–240 are Cytoplasmic-facing; the sequence is ASTSPRSKP. Residues 241-261 form a helical membrane-spanning segment; sequence AFWWLVLAGWGLPVLCTGTWV. At 262–283 the chain is on the extracellular side; sequence GCKLAFEDTECWDLDNSSPCWW. A helical transmembrane segment spans residues 284 to 304; sequence IIKGPIVLSVGVNFGLFLNII. The Cytoplasmic segment spans residues 305 to 331; it reads CILLRKLEPAQGGLHTRAQYWRLSKST. Residues 332–352 traverse the membrane as a helical segment; that stretch reads LLLIPLFGIHYIIFNFLPDSA. Residues 353–357 are Extracellular-facing; that stretch reads GLDIR. Residues 358-378 form a helical membrane-spanning segment; that stretch reads VPLELGLGSFQGFIVAVLYCF. Topologically, residues 379-423 are cytoplasmic; the sequence is LNQEVRTEISRKWYGHDPELLPARRTCTEWTTPPRSRLKVLTSEC.

Belongs to the G-protein coupled receptor 2 family. As to expression, pituitary gland.

It localises to the cell membrane. Receptor for GRF, coupled to G proteins which activate adenylyl cyclase. Stimulates somatotroph cell growth, growth hormone gene transcription and growth hormone secretion. The polypeptide is Growth hormone-releasing hormone receptor (Ghrhr) (Mus musculus (Mouse)).